The sequence spans 387 residues: Protein spaetzle 5 (387 aa).

Residues 1 to 29 (MTKSIKRPPPFSCKQVLLTYVILAYTVAA) form the signal peptide. The propeptide occupies 30–284 (HSSPPPCGLY…PLKKRSRTKR (255 aa)). The disordered stretch occupies residues 133–197 (QTPFGGNPQR…SGGHLYINQS (65 aa)). N-linked (GlcNAc...) asparagine glycosylation is found at N195 and N204. Disordered regions lie at residues 219-256 (KQRQ…QSKR) and 269-291 (GVEA…GRST). Positions 237–247 (QTEEAEEQDNP) are enriched in acidic residues. Basic residues predominate over residues 276 to 286 (LKKRSRTKRQS). A Spaetzle domain is found at 291–384 (TLCQTTSQFI…WFPSCCVCTI (94 aa)). Cystine bridges form between C293–C350, C331–C380, and C340–C382.

As to quaternary structure, homodimer; disulfide-linked. In terms of tissue distribution, detected in the fan-shaped body which is a component of the locomotion center in the central nervous system (CNS) (at protein level).

Functionally, neurotrophin which may function as a ligand for the Toll-related receptors Toll-6 and Toll-7. Binds to Toll-7 and Toll-6, and probably acts as their ligands in the promotion of motor axon targeting and neuronal survival in the central nervous system (CNS). Involved in synaptic targeting of ISNb/d motorneurons and also some SNa motorneurons. May be involved in the normal development of specific neurons at the neuromuscular junction. This Drosophila melanogaster (Fruit fly) protein is Protein spaetzle 5.